We begin with the raw amino-acid sequence, 28 residues long: Chassatide C11 (28 aa).

3 disulfide bridges follow: C3–C19, C7–C21, and C12–C26. M16 is modified (methionine sulfoxide; in form chassatide chaC11A).

The protein belongs to the cyclotide family. Bracelet subfamily. As to expression, expressed in fruit, pedicel and stem but not in leaf and root (at protein level).

Its function is as follows. Chassatide C11: Probably participates in a plant defense mechanism. Active against E.coli ATCC 25922 (MIC=8.5 uM) but not against S.aureus ATCC 12600 or S.epidermidis ATCC 14990. Has cytotoxic and hemolytic activity. In terms of biological role, chassatide C11A: Probably participates in a plant defense mechanism. Has no activity against bacteria up to a concentration of 80 uM. Has no cytotoxic and no hemolytic activity. The chain is Chassatide C11 from Chassalia chartacea (Chassalia curviflora).